The sequence spans 407 residues: Putative polysaccharide ligase RF_0568 (407 aa).

10 helical membrane-spanning segments follow: residues 15 to 35, 71 to 91, 100 to 120, 129 to 149, 166 to 186, 203 to 223, 229 to 249, 272 to 292, 324 to 344, and 379 to 399; these read LGMV…LMLF, MTIK…LFAI, FIQV…VPFG, LILG…SHGF, GCAL…SSGK, ISDS…FILA, IFFK…PVIA, LFIW…GYGF, ILQI…CLVY, and IWQI…KLLV.

Belongs to the O-antigen ligase family.

The protein resides in the membrane. The polypeptide is Putative polysaccharide ligase RF_0568 (Rickettsia felis (strain ATCC VR-1525 / URRWXCal2) (Rickettsia azadi)).